A 332-amino-acid chain; its full sequence is MNPLIFKENRPFDLIAVGRLCVDLNANETQRPMEETRTFTKYVGGSPANIAIGAARLGLQTGFIGKVSDDQMGRFITGYLKDNKINTDQIPIDCTGAVTGLAFTEIKSPEDCSILMYRDNVADLNLDPTEVSEDYIKQSKALLISGTALAKSPSREAVFLALEYARKHDVVVFFDVDYRPYTWQSEAETAVYYNLAAEKSDVIIGTREEFDMMEKLLNYEKSNDQVTAERWFSHHAKIVVIKHGGDGSIAYTRDGQSHRGGIFKTKVLKTFGAGDSYASAFIYGLMQGLEIPQAMRLGGASASIVISKHSCSDAMPTRAEISAFMETAEELV.

This sequence belongs to the carbohydrate kinase PfkB family.

The catalysed reaction is 5-dehydro-2-deoxy-D-gluconate + ATP = 6-phospho-5-dehydro-2-deoxy-D-gluconate + ADP + H(+). Its pathway is polyol metabolism; myo-inositol degradation into acetyl-CoA; acetyl-CoA from myo-inositol: step 5/7. In terms of biological role, catalyzes the phosphorylation of 5-dehydro-2-deoxy-D-gluconate (2-deoxy-5-keto-D-gluconate or DKG) to 6-phospho-5-dehydro-2-deoxy-D-gluconate (DKGP). The sequence is that of 5-dehydro-2-deoxygluconokinase from Bacillus anthracis (strain A0248).